A 283-amino-acid polypeptide reads, in one-letter code: Pantothenate synthetase (283 aa).

26–33 (MGNLHEGH) is an ATP binding site. Histidine 33 acts as the Proton donor in catalysis. Glutamine 57 contacts (R)-pantoate. Glutamine 57 provides a ligand contact to beta-alanine. 144–147 (GKKD) lines the ATP pocket. Glutamine 150 serves as a coordination point for (R)-pantoate. ATP contacts are provided by residues isoleucine 173 and 181 to 184 (LSSR).

It belongs to the pantothenate synthetase family. In terms of assembly, homodimer.

Its subcellular location is the cytoplasm. The catalysed reaction is (R)-pantoate + beta-alanine + ATP = (R)-pantothenate + AMP + diphosphate + H(+). It participates in cofactor biosynthesis; (R)-pantothenate biosynthesis; (R)-pantothenate from (R)-pantoate and beta-alanine: step 1/1. Catalyzes the condensation of pantoate with beta-alanine in an ATP-dependent reaction via a pantoyl-adenylate intermediate. In Polynucleobacter necessarius subsp. necessarius (strain STIR1), this protein is Pantothenate synthetase.